Here is a 699-residue protein sequence, read N- to C-terminus: Transketolase (699 aa).

His-45 contacts substrate. Residues Thr-48, His-85, and 133–135 (GPL) each bind thiamine diphosphate. Asp-177 is a binding site for Mg(2+). 2 residues coordinate thiamine diphosphate: Gly-178 and Asn-207. Asn-207 and Ile-209 together coordinate Mg(2+). The substrate site is built by His-283, Arg-378, and Ser-405. Residue His-283 coordinates thiamine diphosphate. Catalysis depends on Glu-441, which acts as the Proton donor. Phe-467 contacts thiamine diphosphate. Residues His-491, Asp-499, and Arg-552 each coordinate substrate.

It belongs to the transketolase family. In terms of assembly, homodimer. Mg(2+) serves as cofactor. Requires Ca(2+) as cofactor. The cofactor is Mn(2+). It depends on Co(2+) as a cofactor. Thiamine diphosphate is required as a cofactor.

The catalysed reaction is D-sedoheptulose 7-phosphate + D-glyceraldehyde 3-phosphate = aldehydo-D-ribose 5-phosphate + D-xylulose 5-phosphate. In terms of biological role, catalyzes the transfer of a two-carbon ketol group from a ketose donor to an aldose acceptor, via a covalent intermediate with the cofactor thiamine pyrophosphate. The chain is Transketolase (tkt) from Mycobacterium leprae (strain TN).